We begin with the raw amino-acid sequence, 257 residues long: Receptor expression-enhancing protein 4 (257 aa).

2 helical membrane-spanning segments follow: residues 1-21 (MVSWMICRLVVLIFGMLYPAY) and 42-62 (WIVFAIFMAAETFTDIFISWF). Residues Ser152 and Ser194 each carry the phosphoserine modification. The segment at 177 to 257 (VPRRRPPIGY…KKAMPSDMDS (81 aa)) is disordered. A Phosphothreonine modification is found at Thr196. A phosphoserine mark is found at Ser202 and Ser253.

It belongs to the DP1 family.

The protein localises to the endoplasmic reticulum membrane. Microtubule-binding protein required to ensure proper cell division and nuclear envelope reassembly by sequestering the endoplasmic reticulum away from chromosomes during mitosis. Probably acts by clearing the endoplasmic reticulum membrane from metaphase chromosomes. The polypeptide is Receptor expression-enhancing protein 4 (Reep4) (Mus musculus (Mouse)).